Consider the following 118-residue polypeptide: Putative pterin-4-alpha-carbinolamine dehydratase (118 aa).

It belongs to the pterin-4-alpha-carbinolamine dehydratase family.

It carries out the reaction (4aS,6R)-4a-hydroxy-L-erythro-5,6,7,8-tetrahydrobiopterin = (6R)-L-erythro-6,7-dihydrobiopterin + H2O. The sequence is that of Putative pterin-4-alpha-carbinolamine dehydratase from Pseudomonas fluorescens (strain ATCC BAA-477 / NRRL B-23932 / Pf-5).